A 59-amino-acid polypeptide reads, in one-letter code: Potassium channel toxin alpha-KTx 4.7 (59 aa).

The first 22 residues, 1 to 22 (MKAFYGILIIFILISMLDLSQQ), serve as a signal peptide directing secretion. 3 cysteine pairs are disulfide-bonded: C29/C50, C35/C55, and C39/C57. Residues 48–55 (GKCMNGKC) form an interaction with Ca(2+)-activated K(+) channels region.

Belongs to the short scorpion toxin superfamily. Potassium channel inhibitor family. Alpha-KTx 04 subfamily. Expressed by the venom gland.

The protein localises to the secreted. Potently blocks Kv1.1/KCNA1 (85%), Kv1.2/KCNA2 (91%), Kv1.3/KCNA3 (89%), Kv1.6/KCNA6 (94%), and Shaker (97%). The chain is Potassium channel toxin alpha-KTx 4.7 from Tityus stigmurus (Brazilian scorpion).